The chain runs to 173 residues: Ribosome maturation factor RimP (173 aa).

The protein belongs to the RimP family.

The protein resides in the cytoplasm. Its function is as follows. Required for maturation of 30S ribosomal subunits. This chain is Ribosome maturation factor RimP, found in Pelodictyon phaeoclathratiforme (strain DSM 5477 / BU-1).